We begin with the raw amino-acid sequence, 475 residues long: 3-isopropylmalate dehydratase large subunit (475 aa).

Positions 349, 409, and 412 each coordinate [4Fe-4S] cluster.

Belongs to the aconitase/IPM isomerase family. LeuC type 1 subfamily. Heterodimer of LeuC and LeuD. It depends on [4Fe-4S] cluster as a cofactor.

It catalyses the reaction (2R,3S)-3-isopropylmalate = (2S)-2-isopropylmalate. The protein operates within amino-acid biosynthesis; L-leucine biosynthesis; L-leucine from 3-methyl-2-oxobutanoate: step 2/4. Catalyzes the isomerization between 2-isopropylmalate and 3-isopropylmalate, via the formation of 2-isopropylmaleate. This Cereibacter sphaeroides (strain KD131 / KCTC 12085) (Rhodobacter sphaeroides) protein is 3-isopropylmalate dehydratase large subunit.